The following is a 242-amino-acid chain: UPF0309 protein BAbS19_II03080 (242 aa).

The SIS domain maps to 30 to 214; sequence AADLIAAAAR…ARLVGEGDAP (185 aa).

This sequence belongs to the UPF0309 family.

The protein is UPF0309 protein BAbS19_II03080 of Brucella abortus (strain S19).